The primary structure comprises 82 residues: uncharacterized protein (82 aa).

This sequence to M.thermoautotrophicum MTH386.

This is an uncharacterized protein from Methanocaldococcus jannaschii (strain ATCC 43067 / DSM 2661 / JAL-1 / JCM 10045 / NBRC 100440) (Methanococcus jannaschii).